A 313-amino-acid polypeptide reads, in one-letter code: Jacalin-related lectin 8 (313 aa).

Positions 1–23 (MFIIYLFIFLSSAIIDSNGVAMA) are cleaved as a signal peptide. 2 Jacalin-type lectin domains span residues 24 to 163 (QKIE…YVKT) and 165 to 309 (PTKS…YFSP).

It belongs to the jacalin lectin family.

This is Jacalin-related lectin 8 (JAL8) from Arabidopsis thaliana (Mouse-ear cress).